The following is a 348-amino-acid chain: Phosphate acyltransferase (348 aa).

The protein belongs to the PlsX family. In terms of assembly, homodimer. Probably interacts with PlsY.

It localises to the cytoplasm. The catalysed reaction is a fatty acyl-[ACP] + phosphate = an acyl phosphate + holo-[ACP]. It participates in lipid metabolism; phospholipid metabolism. Functionally, catalyzes the reversible formation of acyl-phosphate (acyl-PO(4)) from acyl-[acyl-carrier-protein] (acyl-ACP). This enzyme utilizes acyl-ACP as fatty acyl donor, but not acyl-CoA. The polypeptide is Phosphate acyltransferase (Synechocystis sp. (strain ATCC 27184 / PCC 6803 / Kazusa)).